Reading from the N-terminus, the 304-residue chain is Putative S-adenosyl-L-methionine-dependent methyltransferase YktD (304 aa).

S-adenosyl-L-methionine contacts are provided by residues Asp-134 and 163–164 (DF).

The protein belongs to the UPF0677 family.

May be involved in polyketide synthesis. The sequence is that of Putative S-adenosyl-L-methionine-dependent methyltransferase YktD (yktD) from Bacillus subtilis (strain 168).